A 629-amino-acid chain; its full sequence is Probable potassium transport system protein Kup 3 (629 aa).

12 helical membrane passes run 20–40, 61–81, 106–126, 143–163, 171–191, 212–232, 253–273, 291–311, 343–363, 372–392, 400–420, and 425–445; these read LSLS…LYTF, VSLI…SFAL, PFII…GTIT, PSLK…LFAI, IGKA…ILGA, FLFS…LCVT, WFGL…ALVL, FLLP…QAII, IYIG…TIGF, AYGI…FIAL, IITS…FFAA, and FING…MMYI.

Belongs to the HAK/KUP transporter (TC 2.A.72) family.

The protein localises to the cell inner membrane. It catalyses the reaction K(+)(in) + H(+)(in) = K(+)(out) + H(+)(out). Functionally, transport of potassium into the cell. Likely operates as a K(+):H(+) symporter. The sequence is that of Probable potassium transport system protein Kup 3 from Legionella pneumophila (strain Lens).